The sequence spans 199 residues: Ras-related protein Rab-7b (199 aa).

Residues 15–22 (GALGVGKT), 34–40 (FEEYQTT), 63–67 (DTGGQ), 124–127 (NKID), and 154–155 (AK) each bind GTP. 2 consecutive short sequence motifs (switch) follow at residues 28-41 (YVHK…QTTL) and 67-82 (QERF…KGSD). The residue at position 186 (serine 186) is a Phosphoserine. Residues cysteine 198 and cysteine 199 are each lipidated (S-geranylgeranyl cysteine).

Belongs to the small GTPase superfamily. Rab family.

It is found in the late endosome. The protein localises to the lysosome. The protein resides in the golgi apparatus. It localises to the trans-Golgi network. Its subcellular location is the cytoplasmic vesicle. It is found in the phagosome. The protein localises to the phagosome membrane. Functionally, controls vesicular trafficking from endosomes to the trans-Golgi network (TGN). Acts as a negative regulator of TLR9 signaling and can suppress TLR9-triggered TNFA, IL6, and IFNB production in macrophages by promoting TLR9 lysosomal degradation. Also negatively regulates TLR4 signaling in macrophages by promoting lysosomal degradation of TLR4. Promotes megakaryocytic differentiation by increasing NF-kappa-B-dependent IL6 production and subsequently enhancing the association of STAT3 with GATA1. Not involved in the regulation of the EGF- and EGFR degradation pathway. The chain is Ras-related protein Rab-7b (Rab7b) from Mus musculus (Mouse).